The chain runs to 537 residues: MGIISTILGVIGFGFGTTIGIVIGYYLFIYFQSTDVEDPEIKPLVELDSETIATMFPEIPMWVKNPDFDRIDWLNKLIGHMWPYMDKAICKMAKSIAKPIIAEQIPNYKIDSVEFEMLTLGSLPPSFQGMKVYATDDKEIIMELSVKWAGNPNIIVVAKAFGLKATVQVIDLQVYATPRITLKPLVPSFPCFANIFVSLMDKPQVDFGLKLLGADVMAIPGLYRFVQEIIKDQVANMYLWPKTLNVQIMDPSKAMKKPVGLLSVKVIKAIKLKKKDLLGGSDPYVKLTLSGDKVPGKKTVVKHSNLNPEWNEEFDLVVKEPESQELQLIVYDWEQVGKHDKIGMNVIQLKDLTPEEPKLMTLELLKSMEPKEPVSEKSRGQLVVEVEYKPFKDDDIPENIDDPNAVEKAPEGTPSTGGLLVVIVHEAEDLEGKYHTNPSVRLLFRGEERKTKRVKKNREPRWDEDFQFPLDEPPINDKLHVEVISSSSRLIHPKETLGYVVINLGDVVSNRRINDKYHLIDSKNGRIQIELQWRNSS.

Residues 1–2 (MG) lie on the Cytoplasmic side of the membrane. The helical transmembrane segment at 3-23 (IISTILGVIGFGFGTTIGIVI) threads the bilayer. At 24 to 537 (GYYLFIYFQS…QIELQWRNSS (514 aa)) the chain is on the lumenal side. In terms of domain architecture, SMP-LTD spans 67 to 249 (DFDRIDWLNK…WPKTLNVQIM (183 aa)). Residues 227–505 (QEIIKDQVAN…TLGYVVINLG (279 aa)) are phospholipid binding. C2 domains lie at 240–362 (WPKT…LMTL) and 402–517 (DPNA…NDKY). Ca(2+) is bound by residues D276, D282, D332, and E334.

This sequence belongs to the synaptotagmin family. Ca(2+) serves as cofactor.

The protein localises to the golgi apparatus membrane. In terms of biological role, may play an important role in regulating an unconventional protein trafficking from the cytosol to the extracellular matrix. The protein is Synaptotagmin-2 (SYT2) of Arabidopsis thaliana (Mouse-ear cress).